The primary structure comprises 213 residues: Octanoyltransferase (213 aa).

The BPL/LPL catalytic domain maps to 32-207; sequence DSTLDEIWLV…NILALLNNPD (176 aa). Substrate-binding positions include 71 to 78, 138 to 140, and 151 to 153; these read RGGQVTYH, SLG, and GLA. Residue C169 is the Acyl-thioester intermediate of the active site.

The protein belongs to the LipB family.

The protein resides in the cytoplasm. The enzyme catalyses octanoyl-[ACP] + L-lysyl-[protein] = N(6)-octanoyl-L-lysyl-[protein] + holo-[ACP] + H(+). The protein operates within protein modification; protein lipoylation via endogenous pathway; protein N(6)-(lipoyl)lysine from octanoyl-[acyl-carrier-protein]: step 1/2. Functionally, catalyzes the transfer of endogenously produced octanoic acid from octanoyl-acyl-carrier-protein onto the lipoyl domains of lipoate-dependent enzymes. Lipoyl-ACP can also act as a substrate although octanoyl-ACP is likely to be the physiological substrate. This Escherichia coli O8 (strain IAI1) protein is Octanoyltransferase.